The primary structure comprises 559 residues: Glucose-6-phosphate isomerase 4 (559 aa).

Glutamate 356 acts as the Proton donor in catalysis. Active-site residues include histidine 387 and lysine 513.

It belongs to the GPI family.

Its subcellular location is the cytoplasm. It carries out the reaction alpha-D-glucose 6-phosphate = beta-D-fructose 6-phosphate. Its pathway is carbohydrate biosynthesis; gluconeogenesis. The protein operates within carbohydrate degradation; glycolysis; D-glyceraldehyde 3-phosphate and glycerone phosphate from D-glucose: step 2/4. In terms of biological role, catalyzes the reversible isomerization of glucose-6-phosphate to fructose-6-phosphate. The sequence is that of Glucose-6-phosphate isomerase 4 from Rhodococcus jostii (strain RHA1).